Here is a 480-residue protein sequence, read N- to C-terminus: Probable histone deacetylase 1-A (480 aa).

Positions 10-321 are histone deacetylase; sequence KVCYYYDGDV…WTYETAVALD (312 aa). Residue H141 is part of the active site. Residues 388-480 form a disordered region; it reads SIHDDSGEED…KRVKEETKSV (93 aa). Basic and acidic residues predominate over residues 401 to 416; the sequence is PDKRISIRSSDKRIAC. The span at 417–427 shows a compositional bias: acidic residues; the sequence is DEEFSDSEDEG. The span at 443–480 shows a compositional bias: basic and acidic residues; the sequence is VKTEEEKEGEDKKDVKEEEKAKDEKTDSKRVKEETKSV.

Belongs to the histone deacetylase family. HD type 1 subfamily. Part of a large multiprotein complex that also contains RBBP4. In terms of tissue distribution, oocyte.

It localises to the nucleus. The protein resides in the cytoplasm. It catalyses the reaction N(6)-acetyl-L-lysyl-[histone] + H2O = L-lysyl-[histone] + acetate. The enzyme catalyses N(6)-acetyl-L-lysyl-[protein] + H2O = L-lysyl-[protein] + acetate. It carries out the reaction N(6)-(2E)-butenoyl-L-lysyl-[protein] + H2O = (2E)-2-butenoate + L-lysyl-[protein]. Its function is as follows. Histone deacetylase that catalyzes the deacetylation of lysine residues on the N-terminal part of the core histones (H2A, H2B, H3 and H4). Histone deacetylation gives a tag for epigenetic repression and plays an important role in transcriptional regulation, cell cycle progression and developmental events. Histone deacetylases act via the formation of large multiprotein complexes. Also functions as deacetylase for non-histone proteins. In addition to protein deacetylase activity, also has protein-lysine deacylase activity: acts as a protein decrotonylase by mediating decrotonylation ((2E)-butenoyl) of histones. In Xenopus laevis (African clawed frog), this protein is Probable histone deacetylase 1-A (hdac1-a).